The following is a 347-amino-acid chain: D-alanine--D-alanine ligase (347 aa).

The 199-residue stretch at K134 to K332 folds into the ATP-grasp domain. L161–Y216 contributes to the ATP binding site. Positions 288, 300, and 302 each coordinate Mg(2+).

Belongs to the D-alanine--D-alanine ligase family. Mg(2+) serves as cofactor. Mn(2+) is required as a cofactor.

It localises to the cytoplasm. It carries out the reaction 2 D-alanine + ATP = D-alanyl-D-alanine + ADP + phosphate + H(+). Its pathway is cell wall biogenesis; peptidoglycan biosynthesis. In terms of biological role, cell wall formation. This Helicobacter pylori (strain Shi470) protein is D-alanine--D-alanine ligase.